The primary structure comprises 588 residues: Disabled homolog 1 (588 aa).

Residues 1–26 (MSTETELQVAVKTSAKKDSRKKGQDR) are disordered. A compositionally biased stretch (basic and acidic residues) spans 15-26 (AKKDSRKKGQDR). Residues 36 to 189 (KGEGVRYKAK…CEQAVYQTIL (154 aa)) form the PID domain. Residues Y198, Y220, and Y232 each carry the phosphotyrosine modification. Disordered stretches follow at residues 417–443 (LTPLATVPGTSDSTRSSPQTDKPRQKM), 451–470 (FQMAQPPPVPSRKPDQPSLT), and 502–588 (LTPV…QAGS). Residues 424–436 (PGTSDSTRSSPQT) are compositionally biased toward polar residues. Composition is skewed to low complexity over residues 503–512 (TPVTSTTPST) and 520–534 (PRQSSPSKSSASHAS). A Phosphoserine; by CDK5 modification is found at S524. Residues 537–546 (TTDDIFEEGF) are compositionally biased toward acidic residues.

Associates with the SH2 domains of SRC, FYN and ABL. Interacts (phosphorylated on tyrosine residues) with CRK and CRKL (via respective SH2 domain). Interacts with SIAH1, LRP8 and VLDLR. Interacts with LRP1. Interacts with APLP1 (via NPXY motif). Interacts with DAB2IP. Interacts with ZSWIM8. Phosphorylated by FYN on Tyr-198 and Tyr-220 upon reelin induction in embryonic neurons. Also phosphorylated on Ser-524 independently of reelin signaling. Post-translationally, ubiquitinated by various cullin-5-RING E3 ubiquitin-protein ligase complexes (ECS complexes) following ligand-binding and phosphorylation, leading to its degradation. Ubiquitinated by the ECS(SOCS7) complex in the cortical plate of the developing cerebral cortex following ligand-binding and phosphorylation by FYN, leading to its degradation by the proteasome. Recognized by ZSWIM8 through a disorder targets misorder mechanism that eliminates misfolded DAB1 via ubiquitination and proteasomal degradation. Mainly expressed in brain.

Its subcellular location is the cytoplasm. Signaling adapter of the reelin-mediated signaling pathway, which regulates the migration and differentiation of postmitotic neurons during brain development. Mediates intracellular transduction of Reelin signaling following reelin (RELN)-binding to its receptor: acts by docking proteins through its phosphotyrosine residues and PID domain. This is Disabled homolog 1 (DAB1) from Homo sapiens (Human).